A 64-amino-acid polypeptide reads, in one-letter code: Large ribosomal subunit protein bL35 (64 aa).

This sequence belongs to the bacterial ribosomal protein bL35 family.

This Helicobacter hepaticus (strain ATCC 51449 / 3B1) protein is Large ribosomal subunit protein bL35.